The primary structure comprises 382 residues: Inactive anthranilate O-methyltransferase 1 (382 aa).

Tyr20, Cys61, Asn66, Asp102, Leu103, Ser146, and Tyr147 together coordinate S-adenosyl-L-homocysteine. Positions 268 and 270 each coordinate Mg(2+).

It belongs to the methyltransferase superfamily. Type-7 methyltransferase family. SABATH subfamily.

This is Inactive anthranilate O-methyltransferase 1 (AAMT1I) from Zea mays (Maize).